Here is a 103-residue protein sequence, read N- to C-terminus: Large ribosomal subunit protein bL21 (103 aa).

It belongs to the bacterial ribosomal protein bL21 family. In terms of assembly, part of the 50S ribosomal subunit. Contacts protein L20.

This protein binds to 23S rRNA in the presence of protein L20. In Parvibaculum lavamentivorans (strain DS-1 / DSM 13023 / NCIMB 13966), this protein is Large ribosomal subunit protein bL21.